Consider the following 233-residue polypeptide: tRNA (guanine-N(7)-)-methyltransferase (233 aa).

Glu62, Glu87, Asp116, and Asp138 together coordinate S-adenosyl-L-methionine. Residue Asp138 is part of the active site. Residues Lys142, Asp174, and 212 to 215 (TRYE) each bind substrate.

It belongs to the class I-like SAM-binding methyltransferase superfamily. TrmB family.

It catalyses the reaction guanosine(46) in tRNA + S-adenosyl-L-methionine = N(7)-methylguanosine(46) in tRNA + S-adenosyl-L-homocysteine. It participates in tRNA modification; N(7)-methylguanine-tRNA biosynthesis. Catalyzes the formation of N(7)-methylguanine at position 46 (m7G46) in tRNA. This chain is tRNA (guanine-N(7)-)-methyltransferase, found in Bartonella quintana (strain Toulouse) (Rochalimaea quintana).